A 352-amino-acid polypeptide reads, in one-letter code: DNA polymerase IV (352 aa).

In terms of domain architecture, UmuC spans I4–G185. D8 and D103 together coordinate Mg(2+). Residue E104 is part of the active site.

It belongs to the DNA polymerase type-Y family. As to quaternary structure, monomer. Requires Mg(2+) as cofactor.

The protein localises to the cytoplasm. The catalysed reaction is DNA(n) + a 2'-deoxyribonucleoside 5'-triphosphate = DNA(n+1) + diphosphate. Its function is as follows. Poorly processive, error-prone DNA polymerase involved in untargeted mutagenesis. Copies undamaged DNA at stalled replication forks, which arise in vivo from mismatched or misaligned primer ends. These misaligned primers can be extended by PolIV. Exhibits no 3'-5' exonuclease (proofreading) activity. May be involved in translesional synthesis, in conjunction with the beta clamp from PolIII. This Yersinia pestis bv. Antiqua (strain Antiqua) protein is DNA polymerase IV.